The following is a 701-amino-acid chain: MSQEVLEDLAKVRNIGIMAHIDAGKTTTTERILFYTGITHKIGEVHDGAAAMDWMAQEQERGITITSAATTCFWGGNQINIIDTPGHVDFTVEVERSLRVLDGAVAVFDGKEGVEPQSETVWRQADKYKVPRICFVNKMDKIGADFHFTVKTVVDRLGATPLVIQLPIGSESTFEGVIDLVEMRALTWRGDAKGDVKMGAEYAVEPIPEDLKQQADEFRQKLIETVAENDEALLEKFFSGEEITVAELKSAIRRLTVSGSLYPILCGSSFKNRGVQPMLDAVVDYLPSPLDVPPVTGVDADNPQERLADVSQPFSALAFKVAVHPFFGRLTYIRVYSGTLPAGSQIVNSTKSRKERFGKVFQMHSNKENPVPKMSAGHIYAVIGLKYTTTGDTLCDQDNPIILESMTFPDPVIEVAIEPKTKADQEKLSLAIQRLAEEDPTFKTEQNPETGQTVIKGMGELHLDILVDRMRREFNVEANVGTPQVAYRETIRRTVEKHEYTHKKQTGGAGQFARVIITLEPLEVTGEKTYDFVDTVTGGRIPKEYIPSVDAGIRDAMQVGVLAGYPTVGIKATLVDGAYHDVDSSEMAFRIAGSQAFKEASRRADPTLLEPIMSVEVRTPDEYMGDVIGDLNSRRGHIQSMQDSSGIKVIQARVPLSEMFGYIGDLRSKTSGRAVYSMTFDGYAEAPKSVTEEVVRKARGE.

One can recognise a tr-type G domain in the interval 10-290 (AKVRNIGIMA…AVVDYLPSPL (281 aa)). GTP contacts are provided by residues 19–26 (AHIDAGKT), 83–87 (DTPGH), and 137–140 (NKMD).

The protein belongs to the TRAFAC class translation factor GTPase superfamily. Classic translation factor GTPase family. EF-G/EF-2 subfamily.

It localises to the cytoplasm. In terms of biological role, catalyzes the GTP-dependent ribosomal translocation step during translation elongation. During this step, the ribosome changes from the pre-translocational (PRE) to the post-translocational (POST) state as the newly formed A-site-bound peptidyl-tRNA and P-site-bound deacylated tRNA move to the P and E sites, respectively. Catalyzes the coordinated movement of the two tRNA molecules, the mRNA and conformational changes in the ribosome. The sequence is that of Elongation factor G from Tropheryma whipplei (strain Twist) (Whipple's bacillus).